The sequence spans 322 residues: Protein mono-ADP-ribosyltransferase PARP16 (322 aa).

Topologically, residues 1-287 (MQLSNRAAAR…RASSQLSWLS (287 aa)) are cytoplasmic. The PARP alpha-helical domain maps to 5–91 (NRAAAREAAS…AWDLVSWILS (87 aa)). The PARP catalytic domain maps to 94 to 279 (ILTIHSAKKA…VYSQKQPKRA (186 aa)). NAD(+) contacts are provided by histidine 152, tyrosine 182, and tyrosine 254. The helical transmembrane segment at 288–308 (SHWFVIMMSLYLLLLLIVSVT) threads the bilayer. Topologically, residues 309–322 (NSSVFHHFWNRVKR) are lumenal.

Belongs to the ARTD/PARP family. In terms of assembly, interacts with KPNB1. Auto-mono-ADP-ribosylated.

It is found in the endoplasmic reticulum membrane. The enzyme catalyses L-aspartyl-[protein] + NAD(+) = 4-O-(ADP-D-ribosyl)-L-aspartyl-[protein] + nicotinamide. It catalyses the reaction L-lysyl-[protein] + NAD(+) = N(6)-(ADP-D-ribosyl)-L-lysyl-[protein] + nicotinamide + H(+). The catalysed reaction is L-glutamyl-[protein] + NAD(+) = 5-O-(ADP-D-ribosyl)-L-glutamyl-[protein] + nicotinamide. In absence of activation signal, PARP16 is autoinhibited by the PARP alpha-helical domain (also named HD region), which prevents effective NAD(+)-binding. Activity is highly stimulated by signals, which unfold the PARP alpha-helical domain, relieving autoinhibition. Intracellular mono-ADP-ribosyltransferase that plays a role in different processes, such as protein translation and unfolded protein response (UPR), through the mono-ADP-ribosylation of proteins involved in those processes. Acts as an inhibitor of protein translation by catalyzing mono-ADP-ribosylation of ribosomal subunits, such as RPL14 and RPS6, thereby inhibiting polysome assembly and mRNA loading. Mono-ADP-ribosylation of ribosomal subunits is promoted by NMNAT2. Involved in the unfolded protein response (UPR) by ADP-ribosylating and activating EIF2AK3 and ERN1, two important UPR effectors. May also mediate mono-ADP-ribosylation of karyopherin KPNB1 a nuclear import factor. May not modify proteins on arginine or cysteine residues compared to other mono-ADP-ribosyltransferases. In Mus musculus (Mouse), this protein is Protein mono-ADP-ribosyltransferase PARP16.